A 248-amino-acid polypeptide reads, in one-letter code: Uridylate kinase (248 aa).

11–14 (KISG) serves as a coordination point for ATP. A UMP-binding site is contributed by G53. G54 and R58 together coordinate ATP. Residues D74 and 135–142 (AGSPYLTT) contribute to the UMP site. Residues T162, Y169, and D172 each coordinate ATP.

The protein belongs to the UMP kinase family. As to quaternary structure, homohexamer.

It localises to the cytoplasm. The enzyme catalyses UMP + ATP = UDP + ADP. It participates in pyrimidine metabolism; CTP biosynthesis via de novo pathway; UDP from UMP (UMPK route): step 1/1. With respect to regulation, inhibited by UTP. In terms of biological role, catalyzes the reversible phosphorylation of UMP to UDP. In Chlamydia pneumoniae (Chlamydophila pneumoniae), this protein is Uridylate kinase.